Here is a 103-residue protein sequence, read N- to C-terminus: Small ribosomal subunit protein uS10 (103 aa).

Belongs to the universal ribosomal protein uS10 family. Part of the 30S ribosomal subunit.

Functionally, involved in the binding of tRNA to the ribosomes. This Chromobacterium violaceum (strain ATCC 12472 / DSM 30191 / JCM 1249 / CCUG 213 / NBRC 12614 / NCIMB 9131 / NCTC 9757 / MK) protein is Small ribosomal subunit protein uS10.